We begin with the raw amino-acid sequence, 480 residues long: UDP-N-acetylmuramate--L-alanine ligase (480 aa).

126–132 is a binding site for ATP; that stretch reads GTHGKTT.

It belongs to the MurCDEF family.

It localises to the cytoplasm. It catalyses the reaction UDP-N-acetyl-alpha-D-muramate + L-alanine + ATP = UDP-N-acetyl-alpha-D-muramoyl-L-alanine + ADP + phosphate + H(+). It functions in the pathway cell wall biogenesis; peptidoglycan biosynthesis. Functionally, cell wall formation. The polypeptide is UDP-N-acetylmuramate--L-alanine ligase (Blochmanniella pennsylvanica (strain BPEN)).